Here is a 355-residue protein sequence, read N- to C-terminus: 3,4-dihydroxy-2-butanone 4-phosphate synthase (355 aa).

The segment at 1–202 (MYHKRIKEAI…VSDIIQYRLN (202 aa)) is DHBP synthase. D-ribulose 5-phosphate contacts are provided by residues 27-28 (RE), D32, 139-143 (RTGHT), and E163. A Mg(2+)-binding site is contributed by E28. Position 142 (H142) interacts with Mg(2+). The GTP cyclohydrolase II-like stretch occupies residues 203-355 (FENLLREITR…NLHLVEKIEV (153 aa)).

It in the N-terminal section; belongs to the DHBP synthase family. In the C-terminal section; belongs to the GTP cyclohydrolase II family. It depends on Mg(2+) as a cofactor. The cofactor is Mn(2+).

The catalysed reaction is D-ribulose 5-phosphate = (2S)-2-hydroxy-3-oxobutyl phosphate + formate + H(+). The protein operates within cofactor biosynthesis; riboflavin biosynthesis; 2-hydroxy-3-oxobutyl phosphate from D-ribulose 5-phosphate: step 1/1. Catalyzes the conversion of D-ribulose 5-phosphate to formate and 3,4-dihydroxy-2-butanone 4-phosphate. The polypeptide is 3,4-dihydroxy-2-butanone 4-phosphate synthase (ribB) (Helicobacter hepaticus (strain ATCC 51449 / 3B1)).